Here is a 122-residue protein sequence, read N- to C-terminus: UPF0102 protein MUL_2060 (122 aa).

The protein belongs to the UPF0102 family.

This is UPF0102 protein MUL_2060 from Mycobacterium ulcerans (strain Agy99).